We begin with the raw amino-acid sequence, 245 residues long: 7-cyano-7-deazaguanine synthase 2 (245 aa).

Residue 12–22 (FSGGQDSTTCL) coordinates ATP. 4 residues coordinate Zn(2+): Cys-200, Cys-215, Cys-218, and Cys-221.

It belongs to the QueC family. Zn(2+) serves as cofactor.

The catalysed reaction is 7-carboxy-7-deazaguanine + NH4(+) + ATP = 7-cyano-7-deazaguanine + ADP + phosphate + H2O + H(+). It participates in purine metabolism; 7-cyano-7-deazaguanine biosynthesis. In terms of biological role, catalyzes the ATP-dependent conversion of 7-carboxy-7-deazaguanine (CDG) to 7-cyano-7-deazaguanine (preQ(0)). This Mesorhizobium japonicum (strain LMG 29417 / CECT 9101 / MAFF 303099) (Mesorhizobium loti (strain MAFF 303099)) protein is 7-cyano-7-deazaguanine synthase 2.